The primary structure comprises 268 residues: GTP cyclohydrolase FolE2 (268 aa).

Belongs to the GTP cyclohydrolase IV family.

The catalysed reaction is GTP + H2O = 7,8-dihydroneopterin 3'-triphosphate + formate + H(+). It participates in cofactor biosynthesis; 7,8-dihydroneopterin triphosphate biosynthesis; 7,8-dihydroneopterin triphosphate from GTP: step 1/1. Its function is as follows. Converts GTP to 7,8-dihydroneopterin triphosphate. In Paraburkholderia phymatum (strain DSM 17167 / CIP 108236 / LMG 21445 / STM815) (Burkholderia phymatum), this protein is GTP cyclohydrolase FolE2.